We begin with the raw amino-acid sequence, 216 residues long: Thiopurine S-methyltransferase (216 aa).

Positions 10, 45, 66, and 123 each coordinate S-adenosyl-L-methionine.

Belongs to the class I-like SAM-binding methyltransferase superfamily. TPMT family.

It is found in the cytoplasm. The catalysed reaction is S-adenosyl-L-methionine + a thiopurine = S-adenosyl-L-homocysteine + a thiopurine S-methylether.. The protein is Thiopurine S-methyltransferase of Pseudomonas putida (strain ATCC 700007 / DSM 6899 / JCM 31910 / BCRC 17059 / LMG 24140 / F1).